The primary structure comprises 56 residues: UPF0434 protein Sden_2197 (56 aa).

This sequence belongs to the UPF0434 family.

This Shewanella denitrificans (strain OS217 / ATCC BAA-1090 / DSM 15013) protein is UPF0434 protein Sden_2197.